The following is a 285-amino-acid chain: Probable xyloglucan endotransglucosylase/hydrolase protein 12 (285 aa).

An N-terminal signal peptide occupies residues 1–25 (MAAFATKQSPLLLASLLILIGVATG). One can recognise a GH16 domain in the interval 26 to 215 (SFYDSFDITW…WTNAPFSASY (190 aa)). The active-site Nucleophile is Glu101. Glu105 (proton donor) is an active-site residue. Glu105 contributes to the xyloglucan binding site. A glycan (N-linked (GlcNAc...) asparagine) is linked at Asn109. Xyloglucan contacts are provided by residues 118–120 (HTN), 128–130 (NRE), 194–195 (DW), and Gly199. 2 cysteine pairs are disulfide-bonded: Cys224/Cys235 and Cys268/Cys282. Arg273 serves as a coordination point for xyloglucan.

The protein belongs to the glycosyl hydrolase 16 family. XTH group 2 subfamily. Contains at least one intrachain disulfide bond essential for its enzymatic activity. As to expression, root specific.

Its subcellular location is the secreted. It localises to the cell wall. It is found in the extracellular space. The protein localises to the apoplast. It catalyses the reaction breaks a beta-(1-&gt;4) bond in the backbone of a xyloglucan and transfers the xyloglucanyl segment on to O-4 of the non-reducing terminal glucose residue of an acceptor, which can be a xyloglucan or an oligosaccharide of xyloglucan.. Functionally, catalyzes xyloglucan endohydrolysis (XEH) and/or endotransglycosylation (XET). Cleaves and religates xyloglucan polymers, an essential constituent of the primary cell wall, and thereby participates in cell wall construction of growing tissues. This Arabidopsis thaliana (Mouse-ear cress) protein is Probable xyloglucan endotransglucosylase/hydrolase protein 12 (XTH12).